Reading from the N-terminus, the 315-residue chain is Putative pyruvate, phosphate dikinase regulatory protein (315 aa).

The disordered stretch occupies residues methionine 1–glutamate 32. An ADP-binding site is contributed by glycine 189–threonine 196.

It belongs to the pyruvate, phosphate/water dikinase regulatory protein family. PDRP subfamily.

It carries out the reaction N(tele)-phospho-L-histidyl/L-threonyl-[pyruvate, phosphate dikinase] + ADP = N(tele)-phospho-L-histidyl/O-phospho-L-threonyl-[pyruvate, phosphate dikinase] + AMP + H(+). The enzyme catalyses N(tele)-phospho-L-histidyl/O-phospho-L-threonyl-[pyruvate, phosphate dikinase] + phosphate + H(+) = N(tele)-phospho-L-histidyl/L-threonyl-[pyruvate, phosphate dikinase] + diphosphate. Functionally, bifunctional serine/threonine kinase and phosphorylase involved in the regulation of the pyruvate, phosphate dikinase (PPDK) by catalyzing its phosphorylation/dephosphorylation. In Caulobacter vibrioides (strain ATCC 19089 / CIP 103742 / CB 15) (Caulobacter crescentus), this protein is Putative pyruvate, phosphate dikinase regulatory protein.